Consider the following 222-residue polypeptide: Phosphoribosylformylglycinamidine synthase subunit PurQ (222 aa).

The Glutamine amidotransferase type-1 domain occupies 2–222 (KAAVITFPGS…RALLGGMALV (221 aa)). The Nucleophile role is filled by Cys-86. Active-site residues include His-194 and Glu-196.

In terms of assembly, part of the FGAM synthase complex composed of 1 PurL, 1 PurQ and 2 PurS subunits.

Its subcellular location is the cytoplasm. It carries out the reaction N(2)-formyl-N(1)-(5-phospho-beta-D-ribosyl)glycinamide + L-glutamine + ATP + H2O = 2-formamido-N(1)-(5-O-phospho-beta-D-ribosyl)acetamidine + L-glutamate + ADP + phosphate + H(+). The enzyme catalyses L-glutamine + H2O = L-glutamate + NH4(+). It functions in the pathway purine metabolism; IMP biosynthesis via de novo pathway; 5-amino-1-(5-phospho-D-ribosyl)imidazole from N(2)-formyl-N(1)-(5-phospho-D-ribosyl)glycinamide: step 1/2. Part of the phosphoribosylformylglycinamidine synthase complex involved in the purines biosynthetic pathway. Catalyzes the ATP-dependent conversion of formylglycinamide ribonucleotide (FGAR) and glutamine to yield formylglycinamidine ribonucleotide (FGAM) and glutamate. The FGAM synthase complex is composed of three subunits. PurQ produces an ammonia molecule by converting glutamine to glutamate. PurL transfers the ammonia molecule to FGAR to form FGAM in an ATP-dependent manner. PurS interacts with PurQ and PurL and is thought to assist in the transfer of the ammonia molecule from PurQ to PurL. This chain is Phosphoribosylformylglycinamidine synthase subunit PurQ, found in Cereibacter sphaeroides (strain ATCC 17023 / DSM 158 / JCM 6121 / CCUG 31486 / LMG 2827 / NBRC 12203 / NCIMB 8253 / ATH 2.4.1.) (Rhodobacter sphaeroides).